The following is a 717-amino-acid chain: Ribosomal RNA large subunit methyltransferase K/L (717 aa).

The 112-residue stretch at Ile43 to Leu154 folds into the THUMP domain.

Belongs to the methyltransferase superfamily. RlmKL family.

It localises to the cytoplasm. It catalyses the reaction guanosine(2445) in 23S rRNA + S-adenosyl-L-methionine = N(2)-methylguanosine(2445) in 23S rRNA + S-adenosyl-L-homocysteine + H(+). The catalysed reaction is guanosine(2069) in 23S rRNA + S-adenosyl-L-methionine = N(2)-methylguanosine(2069) in 23S rRNA + S-adenosyl-L-homocysteine + H(+). In terms of biological role, specifically methylates the guanine in position 2445 (m2G2445) and the guanine in position 2069 (m7G2069) of 23S rRNA. This chain is Ribosomal RNA large subunit methyltransferase K/L, found in Aeromonas hydrophila subsp. hydrophila (strain ATCC 7966 / DSM 30187 / BCRC 13018 / CCUG 14551 / JCM 1027 / KCTC 2358 / NCIMB 9240 / NCTC 8049).